The sequence spans 356 residues: MTTYLSLGLEGSANKLGVGVIKHTVTDANAENGFSTDILSNIRDTYITPPGEGFLPRDTARHHRNWVVRIIKRALDEAKISDPTKLHCISFTQGPGMGAPLQSVVIAARTIAQMWGVPLVGVNHCVGHIEMGRTITGATNPVVLYVSGGNTQVIAYSKQRYRIFGETLDIAVGNCLDRFARVLKIPNAPSPGYNIEQLAKKGKKYVPLPYTVKGMDLSMSGVLQFVESLAKRFQAGDLVVDGHQVTAEDLCFSLQETLFAMLVEITERAMAHVNSQQVLIVGGVGCNERLQEMMGIMARDRNGSVYATDERFCIDNGIMIAHAGLLAWRQGFETKMEKTQCTQRFRTDEVLVDWRV.

A divalent metal cation-binding residues include His124, His128, and Tyr145. Substrate contacts are provided by residues 145-149 (YVSGG), Asp177, Gly192, Glu196, and Asn287. Asp315 serves as a coordination point for a divalent metal cation.

Belongs to the KAE1 / TsaD family. As to quaternary structure, component of the EKC/KEOPS complex composed of at least BUD32, CGI121, GON7, KAE1 and PCC1; the whole complex dimerizes. The cofactor is a divalent metal cation.

It is found in the cytoplasm. Its subcellular location is the nucleus. The enzyme catalyses L-threonylcarbamoyladenylate + adenosine(37) in tRNA = N(6)-L-threonylcarbamoyladenosine(37) in tRNA + AMP + H(+). Functionally, component of the EKC/KEOPS complex that is required for the formation of a threonylcarbamoyl group on adenosine at position 37 (t(6)A37) in tRNAs that read codons beginning with adenine. The complex is probably involved in the transfer of the threonylcarbamoyl moiety of threonylcarbamoyl-AMP (TC-AMP) to the N6 group of A37. KAE1 likely plays a direct catalytic role in this reaction, but requires other protein(s) of the complex to fulfill this activity. The EKC/KEOPS complex also promotes both telomere uncapping and telomere elongation. The complex is required for efficient recruitment of transcriptional coactivators. The protein is tRNA N6-adenosine threonylcarbamoyltransferase of Yarrowia lipolytica (strain CLIB 122 / E 150) (Yeast).